Here is a 735-residue protein sequence, read N- to C-terminus: Protostadienol synthase helA (735 aa).

Residues 132 to 173 form a PFTB 1 repeat; it reads KQEMCRYLLNVVNEDGGWGLFIQSPSTVFGTVMNYCMLRILG. Asp463 acts as the Proton donor in catalysis. 3 PFTB repeats span residues 490-531, 567-607, and 616-663; these read LQQA…YENV, LSRS…ACMG, and CQRA…AVIG.

Belongs to the terpene cyclase/mutase family.

It carries out the reaction (S)-2,3-epoxysqualene = (17Z)-protosta-17(20),24-dien-3beta-ol. Its pathway is mycotoxin biosynthesis. Functionally, protostadienol synthase; part of the gene cluster that mediates the biosynthesis of helvolic acid, an antibacterial nortriterpenoid. Protostadienol synthase helA cyclizes (3S)-oxidosqualene to (17Z)-protosta-17(20),24-dien-3-beta-ol (protostadienol). The synthesis of protostadienol is followed by several steps of monooxygenation, dehydrogenation, and acyl transfer to yield the final helvolic acid. Following the cyclization to the tetracyclic protostadienol by helA, cytochrome P450 monooxygenases helB1-mediated and helB2-mediated oxidation at C-4 and C-16, acyltransferase helD2-dependent acetylation of 16-OH, oxidation of C-21 by cytochrome P450 monooxygenase helB4, and short chain dehydrogenase helC-dependent oxidative decarboxylation yield the fusidane skeleton. This intermediate is further modified in three additional steps mediated by the cytochrome P450 monooxygenase helB3, the acyltransferase helD1, and the 3-ketosteroid 1-dehydrogenase helE to give helvolic acid. Compared with the late stages in the biosynthesis of helvolic acid, enzymes involved in the early stage modifications act in a relatively strict order. The hydroxylation of C-16 by helB1 and subsequent acetylation by helD2 should occur before the helB3-mediated oxidation of C-21. C-4 demethylation in fusidane-type antibiotics proceeds in an unusual manner though it is also achieved by oxidative decarboxylation. The methyl group at C-4 beta position is oxidized by helB1 and subsequently removed by the short chain dehydrogenase helC. This Aspergillus fumigatus (strain ATCC MYA-4609 / CBS 101355 / FGSC A1100 / Af293) (Neosartorya fumigata) protein is Protostadienol synthase helA.